The primary structure comprises 227 residues: Dephospho-CoA kinase (227 aa).

The DPCK domain maps to 31-227 (KIGLTGGIGS…EKLFQFINCL (197 aa)). An ATP-binding site is contributed by 39–44 (GSGKST).

It belongs to the CoaE family.

It localises to the cytoplasm. It catalyses the reaction 3'-dephospho-CoA + ATP = ADP + CoA + H(+). It participates in cofactor biosynthesis; coenzyme A biosynthesis; CoA from (R)-pantothenate: step 5/5. Catalyzes the phosphorylation of the 3'-hydroxyl group of dephosphocoenzyme A to form coenzyme A. The sequence is that of Dephospho-CoA kinase from Clostridium tetani (strain Massachusetts / E88).